Consider the following 451-residue polypeptide: MFSEVMRYILDLGPTVMLPIVIIIFSKILGMKAGDCFKAGLHIGIGFVGIGLVIGLMLDSIGPAAKAMAENFDLNLHVVDVGWPGSSPMTWASQIALVAIPIAILVNVAMLLTRMTRVVNVDIWNIWHMTFTGALLHLATGSWMIGMAGVVIHAAFVYKLGDWFARDTRNFFELEGIAIPHGTSAYMGPIAVLVDAIIEKIPGVNRIKFSADDIQRKFGPFGEPVTVGFVMGLIIGILAGYDVKGVLQLAVKTAAVMLLMPRVIKPIMDGLTPIAKQARSRLQAKFGGQEFLIGLDPALLLGHTAVVSASLIFIPLTILIAVCVPGNQVLPFGDLATIGFFVAMAVAVHRGNLFRTLISGVIIMSITLWIATQTIGLHTQLAANAGALKAGGMVASMDQGGSPITWLLIQVFSPQNIPGFIIIGAIYLTGIFMTWRRARGFIKQEKVVLAE.

Positions 6–435 constitute a PTS EIIC type-2 domain; that stretch reads MRYILDLGPT…IYLTGIFMTW (430 aa). Transmembrane regions (helical) follow at residues 9-29, 41-61, 92-112, 138-158, 218-238, 305-325, 329-349, 357-377, 392-412, and 415-435; these read ILDLGPTVMLPIVIIIFSKIL, LHIGIGFVGIGLVIGLMLDSI, ASQIALVAIPIAILVNVAMLL, LATGSWMIGMAGVVIHAAFVY, FGPFGEPVTVGFVMGLIIGIL, AVVSASLIFIPLTILIAVCVP, VLPFGDLATIGFFVAMAVAVH, LISGVIIMSITLWIATQTIGL, GMVASMDQGGSPITWLLIQVF, and QNIPGFIIIGAIYLTGIFMTW.

In terms of assembly, forms a complex with one each of subunit of GatA, GatB and 2 subunits of GatC.

Its subcellular location is the cell inner membrane. The phosphoenolpyruvate-dependent sugar phosphotransferase system (PTS), a major carbohydrate active transport system, catalyzes the phosphorylation of incoming sugar substrates concomitant with their translocation across the cell membrane. The enzyme II complex composed of GatA, GatB and GatC is involved in galactitol transport. In Escherichia coli O157:H7, this protein is PTS system galactitol-specific EIIC component (gatC).